A 159-amino-acid polypeptide reads, in one-letter code: Cyanate hydratase (159 aa).

Catalysis depends on residues arginine 103, glutamate 106, and serine 129.

Belongs to the cyanase family.

The enzyme catalyses cyanate + hydrogencarbonate + 3 H(+) = NH4(+) + 2 CO2. In terms of biological role, catalyzes the reaction of cyanate with bicarbonate to produce ammonia and carbon dioxide. This is Cyanate hydratase from Blastomyces gilchristii (strain SLH14081) (Blastomyces dermatitidis).